The chain runs to 518 residues: 3-octaprenyl-4-hydroxybenzoate carboxy-lyase (518 aa).

Asn-177 is a Mn(2+) binding site. Residues 180 to 182, 194 to 196, and 199 to 200 each bind prenylated FMN; these read IYR, RWL, and RG. Residue Glu-243 coordinates Mn(2+). Asp-318 functions as the Proton donor in the catalytic mechanism.

Belongs to the UbiD family. As to quaternary structure, homohexamer. Prenylated FMN serves as cofactor. Mn(2+) is required as a cofactor.

It is found in the cell membrane. The enzyme catalyses a 4-hydroxy-3-(all-trans-polyprenyl)benzoate + H(+) = a 2-(all-trans-polyprenyl)phenol + CO2. It participates in cofactor biosynthesis; ubiquinone biosynthesis. Its function is as follows. Catalyzes the decarboxylation of 3-octaprenyl-4-hydroxy benzoate to 2-octaprenylphenol, an intermediate step in ubiquinone biosynthesis. This chain is 3-octaprenyl-4-hydroxybenzoate carboxy-lyase, found in Burkholderia lata (strain ATCC 17760 / DSM 23089 / LMG 22485 / NCIMB 9086 / R18194 / 383).